Reading from the N-terminus, the 509-residue chain is Heat shock 70 kDa protein 14 (509 aa).

Belongs to the heat shock protein 70 family. Component of ribosome-associated complex (RAC), a heterodimer composed of Hsp70/DnaK-type chaperone HSPA14 and Hsp40/DnaJ-type chaperone DNAJC2.

Its subcellular location is the cytoplasm. It localises to the cytosol. Component of the ribosome-associated complex (RAC), a complex involved in folding or maintaining nascent polypeptides in a folding-competent state. In the RAC complex, binds to the nascent polypeptide chain, while DNAJC2 stimulates its ATPase activity. The polypeptide is Heat shock 70 kDa protein 14 (HSPA14) (Macaca fascicularis (Crab-eating macaque)).